The sequence spans 886 residues: KH domain-containing protein hrpk-2 (886 aa).

Residues 359–368 (DNHFYNDKDS) are compositionally biased toward basic and acidic residues. The disordered stretch occupies residues 359–433 (DNHFYNDKDS…SHRKESACVD (75 aa)). 2 stretches are compositionally biased toward basic residues: residues 369 to 388 (GKHH…KKHY) and 415 to 425 (HERKKRQRSSH). 2 consecutive KH domains span residues 698–761 (KETV…IEKI) and 775–839 (PGIF…AYLT).

The sequence is that of KH domain-containing protein hrpk-2 from Caenorhabditis elegans.